Reading from the N-terminus, the 421-residue chain is ATP-dependent RNA helicase RhlB (421 aa).

Residues 9–37 carry the Q motif motif; it reads QKFSDFALHPQVVEALEKKGFYNCTPIQA. Residues 40–219 form the Helicase ATP-binding domain; the sequence is LPLTLAGRDV…FEQMNNAEYV (180 aa). 53 to 60 contacts ATP; it reads AQTGTGKT. Residues 165-168 carry the DEAD box motif; it reads DEAD. The 146-residue stretch at 245 to 390 folds into the Helicase C-terminal domain; it reads RLLQTLIEEE…VSKYNPEALM (146 aa). The disordered stretch occupies residues 396–421; that stretch reads PLRLTRSRPGNGPRRAGAPRNRRRSG. The span at 402 to 414 shows a compositional bias: low complexity; that stretch reads SRPGNGPRRAGAP.

Belongs to the DEAD box helicase family. RhlB subfamily. As to quaternary structure, component of the RNA degradosome, which is a multiprotein complex involved in RNA processing and mRNA degradation.

The protein localises to the cytoplasm. It catalyses the reaction ATP + H2O = ADP + phosphate + H(+). Functionally, DEAD-box RNA helicase involved in RNA degradation. Has RNA-dependent ATPase activity and unwinds double-stranded RNA. This chain is ATP-dependent RNA helicase RhlB, found in Salmonella paratyphi A (strain AKU_12601).